Here is a 980-residue protein sequence, read N- to C-terminus: MAVALAAAAGKLRRAIGRSCPWQPFSTEPGPPHGAAVRDAFLSFFRDRHGHRLVPSATVRPRGDPSLLFVNAGMNQFKPIFLGTVDPRSEMAGFRRVVNSQKCVRAGGRHNDLEDVGRDLSHHTFFEMLGNWAFGGEYFKEEACSMAWELLTQVYGIPEDRLWVSYFSGDSQTGLDPDLETRDIWLSLGVPASRVLSFGPQENFWEMGDTGPCGPCTEIHYDLAGGVGSPQLVELWNLVFMQHYREADGSLQLLPQRHVDTGMGLERLVAVLQGKRSTYDTDLFSPLLDAIHQSCGAPPYSGRVGAADEGRIDTAYRVVADHIRTLSVCIADGVSPGMSGAPLVLRRILRRAVRYSTEVLQAPPGFLGSLVPVVVETLGSAYPELEKNSVKIASLVSEDEAAFLASLQRGRRIIDRTVKRLGPSDLFPAEVAWSLSLSGNLGIPLDLVELMLEEKGVKLDTAGLEQLAQKEAQHRAQQAEADQEDRLCLDVHALEELHRQGIPTTDDSPKYNYTLHPNGDYEFGLCEARVLQLYSETGTAVASVGAGQRCGLLLDRTNFYAEQGGQASDRGYLVRTGQQDMLFPVAGAQLCGGFILHEAMAPERLQVGDQVQLYVDKAWRMGCMVKHTATHLLSWALRQTLGPTTEQRGSHLNPERLRFDVATQTLLTTEQLRTVESYVQEVVGQDKPVFMEEVPLAHTARIPGLRSLDEVYPDPVRVVSVGVPVAHALGPASQAAMHTSVELCCGTHLLSTGAVGDLVIIGERQLVKGITRLLAITGEQAQQAREVGQSLSQEVEAASERLSQGSRDLPEAHRLSKDIGRLTEVAESAVIPQWQRQELQTTLKMLQRRANTAIRKLEKGQATEKSQELLKRHSEGPLIVDTVSAESLSVLVKVVRQLCKQAPSISVLLLSPQPTGSVLCACQVAQDATPTFTAEAWALAVCSHMGGKAWGSRVVAQGTGHTADLEAALGTARAYALSQL.

The transit peptide at 1 to 23 directs the protein to the mitochondrion; that stretch reads MAVALAAAAGKLRRAIGRSCPWQ. Residues arginine 105, histidine 123, tryptophan 205, and 235–237 each bind ATP; that span reads LWN. Positions 237 and 260 each coordinate L-alanine. Glycine 264 lines the ATP pocket. Zn(2+) contacts are provided by histidine 627, histidine 631, cysteine 744, and histidine 748.

It belongs to the class-II aminoacyl-tRNA synthetase family. Monomer. It depends on Zn(2+) as a cofactor.

It localises to the mitochondrion. It catalyses the reaction tRNA(Ala) + L-alanine + ATP = L-alanyl-tRNA(Ala) + AMP + diphosphate. The enzyme catalyses (S)-lactate + ATP + H(+) = (S)-lactoyl-AMP + diphosphate. The catalysed reaction is (S)-lactoyl-AMP + L-lysyl-[protein] = N(6)-[(S)-lactoyl]-L-lysyl-[protein] + AMP + 2 H(+). Functionally, catalyzes the attachment of alanine to tRNA(Ala) in a two-step reaction: alanine is first activated by ATP to form Ala-AMP and then transferred to the acceptor end of tRNA(Ala). Also edits incorrectly charged tRNA(Ala) via its editing domain. In presence of high levels of lactate, also acts as a protein lactyltransferase that mediates lactylation of lysine residues in target proteins, such as CGAS. Acts as an inhibitor of cGAS/STING signaling by catalyzing lactylation of CGAS, preventing the formation of liquid-like droplets in which CGAS is activated. The polypeptide is Alanine--tRNA ligase, mitochondrial (Aars2) (Mus musculus (Mouse)).